We begin with the raw amino-acid sequence, 336 residues long: Eukaryotic translation initiation factor 3 subunit I (336 aa).

5 WD repeats span residues 8 to 47 (GHER…RLGT), 50 to 91 (GHLG…KVWE), 146 to 185 (CTES…QLEN), 190 to 229 (EFDH…ILKT), and 287 to 326 (GHFG…FDFM).

This sequence belongs to the eIF-3 subunit I family. As to quaternary structure, component of the eukaryotic translation initiation factor 3 (eIF-3) complex.

It localises to the cytoplasm. In terms of biological role, component of the eukaryotic translation initiation factor 3 (eIF-3) complex, which is involved in protein synthesis of a specialized repertoire of mRNAs and, together with other initiation factors, stimulates binding of mRNA and methionyl-tRNAi to the 40S ribosome. The eIF-3 complex specifically targets and initiates translation of a subset of mRNAs involved in cell proliferation. In Emericella nidulans (strain FGSC A4 / ATCC 38163 / CBS 112.46 / NRRL 194 / M139) (Aspergillus nidulans), this protein is Eukaryotic translation initiation factor 3 subunit I (tif34).